Here is a 397-residue protein sequence, read N- to C-terminus: Translocase of chloroplast 34 homolog, chloroplastic (397 aa).

The segment at 1–72 is disordered; the sequence is MAQPPRPAEE…SQPWAGLNRL (72 aa). Acidic residues-rich tracts occupy residues 10-32 and 44-63; these read EYDD…DDES and AGDE…DEDS. One can recognise an AIG1-type G domain in the interval 90–321; that stretch reads RKQLTVLLLG…YKYHPRLSSK (232 aa). The tract at residues 99-106 is G1; the sequence is GKSSVGKS. GTP is bound by residues 102–107 and 121–126; these read SVGKSS and QAFKLQ. Residue Ser106 participates in Mg(2+) binding. Positions 121 to 124 are homodimerization; that stretch reads QAFK. The tract at residues 126 to 130 is G2; it reads QADTD. The tract at residues 155–158 is G3; that stretch reads DTCG. Residues 193–198 form a homodimerization region; it reads RLDLYR. Residues 227–230 form a G4 region; the sequence is THAN. GTP-binding positions include His228 and 271–272; that span reads EN. Positions 271-273 are G5; it reads ENS. A helical transmembrane segment spans residues 329–349; that stretch reads LLPVAIAAEVLFYRRFLHPRL. An AKR2A-binding sequence (ABS) required for chloroplast outer envelope membrane targeting motif is present at residues 350–358; the sequence is DDNQRRVER.

It belongs to the TRAFAC class TrmE-Era-EngA-EngB-Septin-like GTPase superfamily. AIG1/Toc34/Toc159-like paraseptin GTPase family. TOC34 subfamily. As to quaternary structure, homodimer, heterodimer with other TOC proteins, and monomer. Part of the TOC core complex that includes 1 protein for the specific recognition of transit peptides surrounded by a ring composed of four proteins forming translocation channels, and four to five GTP-binding proteins providing energy. This core complex can interact with components of the TIC complex to form a larger import complex. Interacts with ARSA1. Requires Mg(2+) as cofactor.

Its subcellular location is the plastid. The protein resides in the chloroplast outer membrane. GTPase involved in protein precursor import into chloroplasts. Seems to recognize chloroplast-destined precursor proteins and regulate their presentation to the translocation channel through GTP hydrolysis. Functions as an essential component of the outer chloroplast membrane translocon (TOC) complex, which, in turn, catalyzes the import of nucleus-encoded precursor polypeptides from the cytoplasm to the chloroplast. The sequence is that of Translocase of chloroplast 34 homolog, chloroplastic from Chlamydomonas reinhardtii (Chlamydomonas smithii).